The following is a 127-amino-acid chain: Snaclec bothroinsularin subunit beta (127 aa).

3 disulfides stabilise this stretch: Cys2–Cys13, Cys30–Cys123, and Cys100–Cys115. The 116-residue stretch at 9–124 folds into the C-type lectin domain; sequence YEGSCYRVFE…CTKLEYFVCE (116 aa).

Belongs to the snaclec family. As to quaternary structure, heterodimer of subunits alpha and beta; disulfide-linked. As to expression, expressed by the venom gland.

The protein localises to the secreted. Thrombin and prothrombin (F2) inhibitor. The IC(50) of thrombin-induced platelet aggregation and fibrinocoagulation is 62 and 35 nM, respectively. Its inhibitory activity is at least 10-fold lower than that observed for other thrombin inhibitors. The polypeptide is Snaclec bothroinsularin subunit beta (Bothrops insularis (Golden lancehead)).